A 266-amino-acid polypeptide reads, in one-letter code: Energy-coupling factor transporter transmembrane protein EcfT (266 aa).

Transmembrane regions (helical) follow at residues 26–46 (VIAT…RSVT), 47–67 (LAGL…HYIL), 69–89 (GIKP…LSTP), 116–136 (LIWL…IALT), 151–171 (LPVH…PTLI), 192–212 (SLVA…LSAF), and 246–266 (YAVT…KKAL).

Belongs to the energy-coupling factor EcfT family. In terms of assembly, forms a stable energy-coupling factor (ECF) transporter complex composed of 2 membrane-embedded substrate-binding proteins (S component), 2 ATP-binding proteins (A component) and 2 transmembrane proteins (T component). May be able to interact with more than 1 S component at a time.

It localises to the cell membrane. Functionally, transmembrane (T) component of an energy-coupling factor (ECF) ABC-transporter complex. Unlike classic ABC transporters this ECF transporter provides the energy necessary to transport a number of different substrates. The polypeptide is Energy-coupling factor transporter transmembrane protein EcfT (Heliobacterium modesticaldum (strain ATCC 51547 / Ice1)).